We begin with the raw amino-acid sequence, 1072 residues long: Zn(2)-C6 fungal-type transcription factor FTF1a (1072 aa).

The segment at residues 178-205 (CMACRRKKIRCSGEKPACKHCLRSRILC) is a DNA-binding region (zn(2)-C6 fungal-type).

The protein resides in the nucleus. Zn(2)-C6 fungal-type transcription factor that has a role in the establishment of the fungus within the plant and/or the progress of the disease. Regulates the expression of virulence factors such as SIX1 and SIX6. This is Zn(2)-C6 fungal-type transcription factor FTF1a from Fusarium oxysporum f. sp. lycopersici (strain 4287 / CBS 123668 / FGSC 9935 / NRRL 34936) (Fusarium vascular wilt of tomato).